A 233-amino-acid polypeptide reads, in one-letter code: MGKHIIPQRRGHGSLVYRSPSHRHITEVKHVDQGTYVIKDIIHAPGRNAPLLELMGSDGKKAYQIAFTGAFVGQNIVAGNVDSVSPGTTTVLANIPDGSYVYNIESSPGDGGEFCRSAGTFALVVSHGQHVTLKLPSGRMRDFDPRCRATLGVVAASGIKDPPILKAGTHVHYLRSKAKRPYTVRGVAMNAVNHPHGGGNHQHVGRPSTVGRNAPPGRKVGRLSPKRRRVNGR.

The disordered stretch occupies residues 195 to 233 (PHGGGNHQHVGRPSTVGRNAPPGRKVGRLSPKRRRVNGR). The segment covering 219–233 (KVGRLSPKRRRVNGR) has biased composition (basic residues).

The protein belongs to the universal ribosomal protein uL2 family. In terms of assembly, part of the 50S ribosomal subunit. Forms a bridge to the 30S subunit in the 70S ribosome.

Functionally, one of the primary rRNA binding proteins. Required for association of the 30S and 50S subunits to form the 70S ribosome, for tRNA binding and peptide bond formation. It has been suggested to have peptidyltransferase activity; this is somewhat controversial. Makes several contacts with the 16S rRNA in the 70S ribosome. The polypeptide is Large ribosomal subunit protein uL2 (Thermoplasma acidophilum (strain ATCC 25905 / DSM 1728 / JCM 9062 / NBRC 15155 / AMRC-C165)).